A 116-amino-acid polypeptide reads, in one-letter code: Ribosome-binding factor A (116 aa).

The protein belongs to the RbfA family. In terms of assembly, monomer. Binds 30S ribosomal subunits, but not 50S ribosomal subunits or 70S ribosomes.

Its subcellular location is the cytoplasm. Its function is as follows. One of several proteins that assist in the late maturation steps of the functional core of the 30S ribosomal subunit. Associates with free 30S ribosomal subunits (but not with 30S subunits that are part of 70S ribosomes or polysomes). Required for efficient processing of 16S rRNA. May interact with the 5'-terminal helix region of 16S rRNA. The polypeptide is Ribosome-binding factor A (Chlorobium phaeobacteroides (strain BS1)).